The following is a 236-amino-acid chain: Snake venom serine protease ussurin (236 aa).

Residues 1-227 enclose the Peptidase S1 domain; the sequence is VIGGVECNIN…YTDWIQSIIS (227 aa). Cysteines 28 and 44 form a disulfide. Active-site charge relay system residues include histidine 43 and aspartate 88. Residues asparagine 99 and asparagine 100 are each glycosylated (N-linked (GlcNAc...) asparagine). Disulfide bonds link cysteine 120–cysteine 188, cysteine 152–cysteine 167, and cysteine 178–cysteine 203. The active-site Charge relay system is serine 182.

This sequence belongs to the peptidase S1 family. Snake venom subfamily. Monomer. Expressed by the venom gland.

It is found in the secreted. Its function is as follows. Snake venom serine protease that may act in the hemostasis system of the prey. In Gloydius ussuriensis (Ussuri mamushi), this protein is Snake venom serine protease ussurin.